The sequence spans 130 residues: Small ribosomal subunit protein uS8 (130 aa).

Belongs to the universal ribosomal protein uS8 family. As to quaternary structure, part of the 30S ribosomal subunit.

One of the primary rRNA binding proteins, it binds directly to 16S rRNA central domain where it helps coordinate assembly of the platform of the 30S subunit. This is Small ribosomal subunit protein uS8 from Methanococcus voltae.